The chain runs to 436 residues: 3-ketoacyl-CoA thiolase (436 aa).

C99 serves as the catalytic Acyl-thioester intermediate. Catalysis depends on proton acceptor residues H392 and C422.

This sequence belongs to the thiolase-like superfamily. Thiolase family. As to quaternary structure, heterotetramer of two alpha chains (FadJ) and two beta chains (FadI).

It localises to the cytoplasm. The enzyme catalyses an acyl-CoA + acetyl-CoA = a 3-oxoacyl-CoA + CoA. It functions in the pathway lipid metabolism; fatty acid beta-oxidation. Functionally, catalyzes the final step of fatty acid oxidation in which acetyl-CoA is released and the CoA ester of a fatty acid two carbons shorter is formed. The protein is 3-ketoacyl-CoA thiolase of Salmonella dublin (strain CT_02021853).